Reading from the N-terminus, the 1579-residue chain is tRNA (guanosine(18)-2'-O)-methyltransferase TARBP1 (1579 aa).

An N-acetylmethionine modification is found at M1. S-adenosyl-L-homocysteine-binding residues include V1501, G1524, I1544, Q1546, and L1553.

The protein belongs to the class IV-like SAM-binding methyltransferase superfamily. RNA methyltransferase TrmH family. As to quaternary structure, monomer and homodimer.

The catalysed reaction is guanosine(18) in tRNA + S-adenosyl-L-methionine = 2'-O-methylguanosine(18) in tRNA + S-adenosyl-L-homocysteine + H(+). Functionally, S-adenosyl-L-methionine-dependent 2'-O-ribose methyltransferase that catalyzes the formation of 2'-O-methylguanosine at position 18 (Gm18) in a subset of tRNA. Selectively mediates Gm18 methylation of tRNAGln-TTG/CTG and tRNASer-TGA/GCT. Gm18 modification can enhance the stability of modified tRNAs. This Mus musculus (Mouse) protein is tRNA (guanosine(18)-2'-O)-methyltransferase TARBP1.